Consider the following 572-residue polypeptide: Methionine--tRNA ligase (572 aa).

The short motif at 11–21 (PYINGVKHLGN) is the 'HIGH' region element. The Zn(2+) site is built by Cys143, Cys146, Cys156, and Cys159. The short motif at 341 to 345 (KFSTS) is the 'KMSKS' region element. An ATP-binding site is contributed by Thr344.

It belongs to the class-I aminoacyl-tRNA synthetase family. MetG type 1 subfamily. In terms of assembly, monomer. Requires Zn(2+) as cofactor.

It localises to the cytoplasm. It carries out the reaction tRNA(Met) + L-methionine + ATP = L-methionyl-tRNA(Met) + AMP + diphosphate. Its function is as follows. Is required not only for elongation of protein synthesis but also for the initiation of all mRNA translation through initiator tRNA(fMet) aminoacylation. The chain is Methionine--tRNA ligase from Maricaulis maris (strain MCS10) (Caulobacter maris).